Here is a 254-residue protein sequence, read N- to C-terminus: Nickel import ATP-binding protein NikD (254 aa).

Residues 2 to 241 (PQQIELRNIA…PKHTVTRSLV (240 aa)) form the ABC transporter domain. 36–43 (GGSGSGKS) contributes to the ATP binding site.

This sequence belongs to the ABC transporter superfamily. Nickel importer (TC 3.A.1.5.3) family. In terms of assembly, the complex is composed of two ATP-binding proteins (NikD and NikE), two transmembrane proteins (NikB and NikC) and a solute-binding protein (NikA).

It localises to the cell inner membrane. It catalyses the reaction Ni(2+)(out) + ATP + H2O = Ni(2+)(in) + ADP + phosphate + H(+). In terms of biological role, part of the ABC transporter complex NikABCDE involved in nickel import. Responsible for energy coupling to the transport system. The sequence is that of Nickel import ATP-binding protein NikD from Escherichia coli (strain K12).